Reading from the N-terminus, the 1197-residue chain is ATP-dependent helicase/nuclease subunit A (1197 aa).

The region spanning 2 to 458 (KNWTTEQQAA…IDLAKNFRSR (457 aa)) is the UvrD-like helicase ATP-binding domain. ATP is bound at residue 23-30 (AAAGSGKT). One can recognise a UvrD-like helicase C-terminal domain in the interval 485-774 (RAALYQGASF…RIMSIHKSKG (290 aa)).

Belongs to the helicase family. AddA subfamily. In terms of assembly, heterodimer of AddA and AddB/RexB. Requires Mg(2+) as cofactor.

The enzyme catalyses Couples ATP hydrolysis with the unwinding of duplex DNA by translocating in the 3'-5' direction.. It catalyses the reaction ATP + H2O = ADP + phosphate + H(+). The heterodimer acts as both an ATP-dependent DNA helicase and an ATP-dependent, dual-direction single-stranded exonuclease. Recognizes the chi site generating a DNA molecule suitable for the initiation of homologous recombination. The AddA nuclease domain is required for chi fragment generation; this subunit has the helicase and 3' -&gt; 5' nuclease activities. The protein is ATP-dependent helicase/nuclease subunit A of Alkaliphilus metalliredigens (strain QYMF).